Consider the following 220-residue polypeptide: N-(5'-phosphoribosyl)anthranilate isomerase (220 aa).

This sequence belongs to the TrpF family.

It catalyses the reaction N-(5-phospho-beta-D-ribosyl)anthranilate = 1-(2-carboxyphenylamino)-1-deoxy-D-ribulose 5-phosphate. The protein operates within amino-acid biosynthesis; L-tryptophan biosynthesis; L-tryptophan from chorismate: step 3/5. The sequence is that of N-(5'-phosphoribosyl)anthranilate isomerase from Xylella fastidiosa (strain M23).